The following is a 381-amino-acid chain: MKAGATSMWASCCGLLNEVMGTGAVRGQQAGFPGSTGPFRFTPSSDFPTYPPAATEGPNIVCKACGLSFSVFRKKHVCCDCKKDFCSLCSVSQENLRRCSTCHLLQETAFQRPQLMRLKVKDLRQYLLLRNVPTDTCREKEDLVDLVLCHRGLGSGDGLDSRSLSSSRSQTSSFFTQSYFSNYTPPSATVSSFQGELMDREGTFRSEVLTQVQSELASANTDDEDGEEDDDDDDDDDDEDDDEQEENLEEQNPGLSKKKARASLSDLSSLEEVEGMSVRQLKEILARNFVNYSGCCEKWELVEKVNRLYKENEENQKSYGERMQLQDEEDDSLCRICMDAVIDCVLLECGHMVTCTKCGKRMSECPICRQYVVRAVHVFKS.

The segment at 56-107 (EGPNIVCKACGLSFSVFRKKHVCCDCKKDFCSLCSVSQENLRRCSTCHLLQE) adopts an FYVE-type zinc-finger fold. Residues 115–134 (LMRLKVKDLRQYLLLRNVPT) form the SAP 1 domain. Position 169 is a phosphoserine (Ser169). The tract at residues 216–261 (LASANTDDEDGEEDDDDDDDDDDEDDDEQEENLEEQNPGLSKKKAR) is disordered. A compositionally biased stretch (acidic residues) spans 221 to 249 (TDDEDGEEDDDDDDDDDDEDDDEQEENLE). Ser263 and Ser265 each carry phosphoserine. In terms of domain architecture, SAP 2 spans 273–287 (VEGMSVRQLKEILAR). Residues 334–369 (CRICMDAVIDCVLLECGHMVTCTKCGKRMSECPICR) form an RING-type zinc finger.

As to quaternary structure, interacts with CASP8 and CASP10. Interacts with p53/TP53; involved in p53/TP53 ubiquitination. Interacts (via RING-type zinc finger) with MDM2; the interaction stabilizes MDM2. Interacts (via RING-type zinc finger) with PPARGC1A. Interacts with NOD1. In terms of processing, proteolytically cleaved by caspases upon induction of apoptosis by TNF. Post-translationally, autoubiquitinated (in vitro). As to expression, ubiquitous. Detected in brain, cerebellum, midbrain, hippocampus, striatum, heart, lung, kidney, muscle, spleen and testis.

It is found in the cell membrane. It localises to the endomembrane system. Its subcellular location is the nucleus. The protein resides in the nucleus speckle. The protein localises to the cytoplasm. It is found in the cytosol. The enzyme catalyses S-ubiquitinyl-[E2 ubiquitin-conjugating enzyme]-L-cysteine + [acceptor protein]-L-lysine = [E2 ubiquitin-conjugating enzyme]-L-cysteine + N(6)-ubiquitinyl-[acceptor protein]-L-lysine.. Its pathway is protein modification; protein ubiquitination. E3 ubiquitin-protein ligase that regulates several biological processes through the ubiquitin-mediated proteasomal degradation of various target proteins. Ubiquitinates the caspases CASP8 and CASP10, promoting their proteasomal degradation, to negatively regulate cell death downstream of death domain receptors in the extrinsic pathway of apoptosis. May mediate 'Lys-48'-linked polyubiquitination of RIPK1 and its subsequent proteasomal degradation thereby indirectly regulating the tumor necrosis factor-mediated signaling pathway. Negatively regulates p53/TP53 through its direct ubiquitination and targeting to proteasomal degradation. Indirectly, may also negatively regulate p53/TP53 through ubiquitination and degradation of SFN. Mediates PPARGC1A proteasomal degradation probably through ubiquitination thereby indirectly regulating the metabolism of brown fat cells. Possibly involved in innate immunity, through 'Lys-48'-linked polyubiquitination of NOD1 and its subsequent proteasomal degradation. The chain is E3 ubiquitin-protein ligase RNF34 from Rattus norvegicus (Rat).